The primary structure comprises 564 residues: MEVTLKEFRELCTSISTESSYVKKTKLISEFIHRGRDYNDVYIITKLLLPGTGKLIYNINDKQLVKLFSKIFCHDADEMYKYVINIGDVAYVIGSFLKKSKSVVDYATESTLTLHEVDCFLTRLSTVTRENDQIKEIKKIIPRCTPNDLRHIIRLIKHDLRMNIGPKHVLSGLHKDAYGIFKLCNNLEQVVQRSLEDNIKPLIELMVPLQPMLASACKTFSEAVKKCPNGIIVEFKYDGERIQIHKHDKNFKYFSRSLKPITPHKVTDFEELLDRAFPSAKNMILDGEIILIDTETNQPLPFGTLGINKKSMYHNACVCIFIFDCLYFNDTVLIDKPLIERRNIIHANIKEIPNRILLSEVKNISTDEELSKLLHIVLSKNIEGFVLKDAKGVYEPGMRRWLKIKKDYLDGCVMADKADLVVLGAYYGKGNKSGILSSFLMGCYDTKSEKWCTVTKCSGGHTDLELQEINDNLSVVPFDRNAIPDWLSINKIHYPDVIISDISLAPVWEIIGSEFTRSSTHTASNISIRFPRCSRIREDKTYETANNLNDIKQLYAVSISPPEE.

Residue Glu234 participates in ATP binding. The active-site N6-AMP-lysine intermediate is Lys236. Residues Arg241, Arg256, Glu288, and Phe323 each contribute to the ATP site. Glu288 provides a ligand contact to a divalent metal cation. Residue Glu383 participates in a divalent metal cation binding. The ATP site is built by Arg399 and Lys403.

The protein belongs to the ATP-dependent DNA ligase family. A divalent metal cation serves as cofactor.

The catalysed reaction is ATP + (deoxyribonucleotide)n-3'-hydroxyl + 5'-phospho-(deoxyribonucleotide)m = (deoxyribonucleotide)n+m + AMP + diphosphate.. Its function is as follows. DNA ligase that seals nicks in double-stranded DNA during DNA replication, DNA recombination and DNA repair. It is not essential for viral replication and recombination. The sequence is that of DNA ligase (LIG) from Vertebrata (FPV).